The following is a 309-amino-acid chain: tRNA hydroxylation protein P2 (309 aa).

It belongs to the peptidase U32 family.

Functionally, involved in prephenate-dependent formation of 5-hydroxyuridine (ho5U) modification at position 34 in tRNAs, the first step in 5-methoxyuridine (mo5U) biosynthesis. This Bacillus subtilis (strain 168) protein is tRNA hydroxylation protein P2.